A 472-amino-acid chain; its full sequence is Kynureninase 1 (472 aa).

Residues L146, T147, 174–177 (FPSD), S231, D260, H263, and Y285 each bind pyridoxal 5'-phosphate. K286 is modified (N6-(pyridoxal phosphate)lysine). Positions 326 and 354 each coordinate pyridoxal 5'-phosphate.

This sequence belongs to the kynureninase family. In terms of assembly, homodimer. Pyridoxal 5'-phosphate is required as a cofactor.

The protein localises to the cytoplasm. The enzyme catalyses L-kynurenine + H2O = anthranilate + L-alanine + H(+). The catalysed reaction is 3-hydroxy-L-kynurenine + H2O = 3-hydroxyanthranilate + L-alanine + H(+). It functions in the pathway amino-acid degradation; L-kynurenine degradation; L-alanine and anthranilate from L-kynurenine: step 1/1. The protein operates within cofactor biosynthesis; NAD(+) biosynthesis; quinolinate from L-kynurenine: step 2/3. Functionally, catalyzes the cleavage of L-kynurenine (L-Kyn) and L-3-hydroxykynurenine (L-3OHKyn) into anthranilic acid (AA) and 3-hydroxyanthranilic acid (3-OHAA), respectively. In Aspergillus niger (strain ATCC MYA-4892 / CBS 513.88 / FGSC A1513), this protein is Kynureninase 1 (bna5-1).